A 1462-amino-acid chain; its full sequence is DNA polymerase alpha catalytic subunit (1462 aa).

Disordered stretches follow at residues Met1–Glu33 and Asp98–Val123. Positions Arg20–Lys29 are enriched in basic residues. Residues Ala106–Arg116 show a composition bias toward basic and acidic residues. Position 174 is a phosphothreonine (Thr174). Phosphoserine occurs at positions 186, 190, and 209. The residue at position 224 (Lys224) is an N6-acetyllysine. The tract at residues Asp232 to Asp251 is disordered. The residue at position 406 (Thr406) is a Phosphothreonine. The DNA-binding stretch occupies residues Arg650–Ile715. Lys970 is modified (N6-succinyllysine). Residues Gln1245 to Lys1376 form a DNA-binding region. 8 residues coordinate Zn(2+): Cys1283, Cys1286, Cys1310, Cys1315, Cys1348, Cys1353, Cys1371, and Cys1374. The CysA-type zinc finger occupies Cys1283–Ser1318. Positions Cys1348–Cys1374 match the CysB motif motif.

The protein belongs to the DNA polymerase type-B family. In terms of assembly, component of the alpha DNA polymerase complex (also known as the alpha DNA polymerase-primase complex) consisting of four subunits: the catalytic subunit POLA1, the regulatory subunit POLA2, and the primase complex subunits PRIM1 and PRIM2 respectively. Interacts with PARP1; this interaction functions as part of the control of replication fork progression. Interacts with MCM10 and WDHD1; these interactions recruit the polymerase alpha complex to the pre-replicative complex bound to DNA. Interacts with RPA1; this interaction stabilizes the replicative complex and reduces the misincorporation rate of DNA polymerase alpha by acting as a fidelity clamp. (Microbial infection) Interacts with SV40 Large T antigen; this interaction allows viral DNA replication. As to quaternary structure, (Microbial infection) Interacts with herpes simplex virus 1/HHV-1 replication origin-binding protein UL9. A 165 kDa form is probably produced by proteolytic cleavage at Lys-124.

Its subcellular location is the nucleus. The protein localises to the cytoplasm. It is found in the cytosol. It catalyses the reaction DNA(n) + a 2'-deoxyribonucleoside 5'-triphosphate = DNA(n+1) + diphosphate. Autoinhibited in apo-primosome, where the zinc motif of POLA1 and oligonucleotide/olicosaccharide-binding domain of POLA2 are placed into the active site blocking RNA:DNA duplex entry. Catalytic subunit of the DNA polymerase alpha complex (also known as the alpha DNA polymerase-primase complex) which plays an essential role in the initiation of DNA synthesis. During the S phase of the cell cycle, the DNA polymerase alpha complex (composed of a catalytic subunit POLA1, a regulatory subunit POLA2 and two primase subunits PRIM1 and PRIM2) is recruited to DNA at the replicative forks via direct interactions with MCM10 and WDHD1. The primase subunit of the polymerase alpha complex initiates DNA synthesis by oligomerising short RNA primers on both leading and lagging strands. These primers are initially extended by the polymerase alpha catalytic subunit and subsequently transferred to polymerase delta and polymerase epsilon for processive synthesis on the lagging and leading strand, respectively. The reason this transfer occurs is because the polymerase alpha has limited processivity and lacks intrinsic 3' exonuclease activity for proofreading error, and therefore is not well suited for replicating long complexes. In the cytosol, responsible for a substantial proportion of the physiological concentration of cytosolic RNA:DNA hybrids, which are necessary to prevent spontaneous activation of type I interferon responses. In Homo sapiens (Human), this protein is DNA polymerase alpha catalytic subunit (POLA1).